The chain runs to 84 residues: Small ribosomal subunit protein uS17 (84 aa).

The protein belongs to the universal ribosomal protein uS17 family. In terms of assembly, part of the 30S ribosomal subunit.

One of the primary rRNA binding proteins, it binds specifically to the 5'-end of 16S ribosomal RNA. The protein is Small ribosomal subunit protein uS17 of Ureaplasma parvum serovar 3 (strain ATCC 27815 / 27 / NCTC 11736).